The sequence spans 375 residues: FK506-binding protein 4 (375 aa).

Disordered stretches follow at residues 55–78 (GFEDDYDEEEQEKEPKSTDEEEEI) and 127–265 (PPDF…SKMT). Composition is skewed to acidic residues over residues 56 to 66 (FEDDYDEEEQE) and 131 to 173 (FDQD…DPDR). The segment covering 196–216 (DSKKRAAEKPVKETAAKKLKA) has biased composition (basic and acidic residues). Low complexity predominate over residues 217–230 (DASAASAASTPTKA). A compositionally biased stretch (basic and acidic residues) spans 231–261 (IETKGEKQTKGAKDTKPKSETVEKKTVDKST). The PPIase FKBP-type domain occupies 289–375 (GQKVGMRYVG…VFDVKLVEIK (87 aa)).

It belongs to the FKBP-type PPIase family. FKBP3/4 subfamily. In terms of assembly, binds to histones H3 and H4.

Its subcellular location is the nucleus. It carries out the reaction [protein]-peptidylproline (omega=180) = [protein]-peptidylproline (omega=0). Inhibited by both FK506 and rapamycin. In terms of biological role, PPIase that acts as a histone chaperone. Histone proline isomerase that increases the rate of cis-trans isomerization at prolines on the histone H3 N-terminal tail. Proline isomerization influences H3 methylation thereby regulating gene expression. In Mycosarcoma maydis (Corn smut fungus), this protein is FK506-binding protein 4 (FPR4).